Here is a 180-residue protein sequence, read N- to C-terminus: ATP-dependent protease subunit HslV (180 aa).

Thr7 is an active-site residue. 3 residues coordinate Na(+): Ala163, Cys166, and Thr169.

The protein belongs to the peptidase T1B family. HslV subfamily. A double ring-shaped homohexamer of HslV is capped on each side by a ring-shaped HslU homohexamer. The assembly of the HslU/HslV complex is dependent on binding of ATP.

The protein localises to the cytoplasm. The catalysed reaction is ATP-dependent cleavage of peptide bonds with broad specificity.. Allosterically activated by HslU binding. Functionally, protease subunit of a proteasome-like degradation complex believed to be a general protein degrading machinery. In Cytophaga hutchinsonii (strain ATCC 33406 / DSM 1761 / CIP 103989 / NBRC 15051 / NCIMB 9469 / D465), this protein is ATP-dependent protease subunit HslV.